A 364-amino-acid polypeptide reads, in one-letter code: Putative agmatine deiminase (364 aa).

Cysteine 355 functions as the Amidino-cysteine intermediate in the catalytic mechanism.

Belongs to the agmatine deiminase family.

It catalyses the reaction agmatine + H2O = N-carbamoylputrescine + NH4(+). The protein is Putative agmatine deiminase of Mycoplasma mycoides subsp. mycoides SC (strain CCUG 32753 / NCTC 10114 / PG1).